A 208-amino-acid chain; its full sequence is Glutathione S-transferase F6 (208 aa).

Residues 2–83 (AGIKVFGHPA…YIAHEFSDKG (82 aa)) form the GST N-terminal domain. Residues 12-13 (ST), 41-42 (HK), 54-55 (KV), and 67-68 (ES) contribute to the glutathione site. A GST C-terminal domain is found at 89–208 (TGKDMAIIAM…TSRPSAQKVL (120 aa)).

It belongs to the GST superfamily. Phi family.

The protein localises to the cytoplasm. The protein resides in the cytosol. The enzyme catalyses RX + glutathione = an S-substituted glutathione + a halide anion + H(+). In terms of biological role, involved in camalexin biosynthesis by probably catalyzing the conjugation of GSH with indole-3-acetonitrile (IAN). May be involved in the conjugation of reduced glutathione to a wide number of exogenous and endogenous hydrophobic electrophiles and have a detoxification role against certain herbicides. The protein is Glutathione S-transferase F6 (GSTF6) of Arabidopsis thaliana (Mouse-ear cress).